We begin with the raw amino-acid sequence, 137 residues long: Secreted RxLR effector protein 67 (137 aa).

The N-terminal stretch at methionine 1 to alanine 18 is a signal peptide. The RxLR-dEER signature appears at arginine 32 to arginine 61. A disordered region spans residues threonine 40–serine 65. Residues tryptophan 114–alanine 134 form a helical membrane-spanning segment.

Belongs to the RxLR effector family.

The protein localises to the secreted. Its subcellular location is the host cytoplasm. It localises to the host nucleus. It is found in the membrane. Its function is as follows. Effector that partially suppresses the tobacco programmed cell death induced by cell death-inducing proteins. The sequence is that of Secreted RxLR effector protein 67 from Plasmopara viticola (Downy mildew of grapevine).